Here is a 466-residue protein sequence, read N- to C-terminus: Methylenetetrahydrofolate--tRNA-(uracil-5-)-methyltransferase TrmFO (466 aa).

14–19 provides a ligand contact to FAD; that stretch reads GGGLAG.

Belongs to the MnmG family. TrmFO subfamily. It depends on FAD as a cofactor.

The protein resides in the cytoplasm. It catalyses the reaction uridine(54) in tRNA + (6R)-5,10-methylene-5,6,7,8-tetrahydrofolate + NADH + H(+) = 5-methyluridine(54) in tRNA + (6S)-5,6,7,8-tetrahydrofolate + NAD(+). The enzyme catalyses uridine(54) in tRNA + (6R)-5,10-methylene-5,6,7,8-tetrahydrofolate + NADPH + H(+) = 5-methyluridine(54) in tRNA + (6S)-5,6,7,8-tetrahydrofolate + NADP(+). Its function is as follows. Catalyzes the folate-dependent formation of 5-methyl-uridine at position 54 (M-5-U54) in all tRNAs. In Brucella melitensis biotype 1 (strain ATCC 23456 / CCUG 17765 / NCTC 10094 / 16M), this protein is Methylenetetrahydrofolate--tRNA-(uracil-5-)-methyltransferase TrmFO.